The primary structure comprises 216 residues: uncharacterized protein (216 aa).

In terms of domain architecture, HTH cro/C1-type spans 8-63 (LKTLMTSVHINASELARRTGIAQPIIHRLSTGQNTNPKLATIKPIARYFMVNISQL). The H-T-H motif DNA-binding region spans 19-38 (ASELARRTGIAQPIIHRLST).

This is an uncharacterized protein from Coxiella burnetii (strain RSA 493 / Nine Mile phase I).